We begin with the raw amino-acid sequence, 211 residues long: Peptidyl-tRNA hydrolase (211 aa).

Y15 contributes to the tRNA binding site. Residue H20 is the Proton acceptor of the active site. Residues F66, N68, and N114 each coordinate tRNA. The tract at residues 189–211 is disordered; that stretch reads TKPPRPKATRPAQAQAAPQAGAD. The span at 197-211 shows a compositional bias: low complexity; the sequence is TRPAQAQAAPQAGAD.

Belongs to the PTH family. Monomer.

Its subcellular location is the cytoplasm. The catalysed reaction is an N-acyl-L-alpha-aminoacyl-tRNA + H2O = an N-acyl-L-amino acid + a tRNA + H(+). Functionally, hydrolyzes ribosome-free peptidyl-tRNAs (with 1 or more amino acids incorporated), which drop off the ribosome during protein synthesis, or as a result of ribosome stalling. In terms of biological role, catalyzes the release of premature peptidyl moieties from peptidyl-tRNA molecules trapped in stalled 50S ribosomal subunits, and thus maintains levels of free tRNAs and 50S ribosomes. This chain is Peptidyl-tRNA hydrolase, found in Acidovorax ebreus (strain TPSY) (Diaphorobacter sp. (strain TPSY)).